Here is a 337-residue protein sequence, read N- to C-terminus: Protein SphX (337 aa).

Residues 1–30 form the signal peptide; it reads MTTLKPALRRAAVLLPIAAVASSLFPIQEA.

Belongs to the PstS family. In terms of processing, the N-terminus is blocked.

The protein resides in the cell inner membrane. May be involved in the system for phosphate transport across the cytoplasmic membrane. In Synechococcus elongatus (strain ATCC 33912 / PCC 7942 / FACHB-805) (Anacystis nidulans R2), this protein is Protein SphX (sphX).